Reading from the N-terminus, the 417-residue chain is Phosphoglycerate kinase (417 aa).

14 residues coordinate (2R)-3-phosphoglycerate: V23, D24, F25, N26, Q39, R40, S63, H64, G66, R67, L122, R123, H170, and R171. Residue G214 participates in ADP binding. Position 214 (G214) interacts with CDP. Residues A215 and K216 each contribute to the AMP site. An ATP-binding site is contributed by A215. Position 215 (A215) interacts with Mg(2+). D219 lines the CDP pocket. D219 serves as a coordination point for Mg(2+). Residue K220 participates in AMP binding. K220 contacts ATP. G238 is an ADP binding site. G238 serves as a coordination point for CDP. G239 and G313 together coordinate AMP. Residues G239 and G313 each coordinate ATP. Positions 338 and 343 each coordinate CDP. ADP is bound at residue F343. E344 contributes to the AMP binding site. Positions 344, 375, and 376 each coordinate ATP. D375 serves as a coordination point for Mg(2+).

This sequence belongs to the phosphoglycerate kinase family. In terms of assembly, monomer. Mg(2+) serves as cofactor.

It is found in the cytoplasm. The protein resides in the mitochondrion. The catalysed reaction is (2R)-3-phosphoglycerate + ATP = (2R)-3-phospho-glyceroyl phosphate + ADP. The protein operates within carbohydrate degradation; glycolysis; pyruvate from D-glyceraldehyde 3-phosphate: step 2/5. Functionally, catalyzes one of the two ATP producing reactions in the glycolytic pathway via the reversible conversion of 1,3-diphosphoglycerate to 3-phosphoglycerate. Both L- and D- forms of purine and pyrimidine nucleotides can be used as substrates, but the activity is much lower on pyrimidines. Negatively regulates the biosynthesis of acetyl-CoA from pyruvate in the mitochondrion. The protein is Phosphoglycerate kinase (PGKA) of Penicillium citrinum.